A 316-amino-acid chain; its full sequence is tRNA(Ile)-lysidine synthase (316 aa).

33–38 (SGGTDS) contacts ATP.

Belongs to the tRNA(Ile)-lysidine synthase family.

It is found in the cytoplasm. It carries out the reaction cytidine(34) in tRNA(Ile2) + L-lysine + ATP = lysidine(34) in tRNA(Ile2) + AMP + diphosphate + H(+). Its function is as follows. Ligates lysine onto the cytidine present at position 34 of the AUA codon-specific tRNA(Ile) that contains the anticodon CAU, in an ATP-dependent manner. Cytidine is converted to lysidine, thus changing the amino acid specificity of the tRNA from methionine to isoleucine. The protein is tRNA(Ile)-lysidine synthase of Bdellovibrio bacteriovorus (strain ATCC 15356 / DSM 50701 / NCIMB 9529 / HD100).